A 236-amino-acid chain; its full sequence is uncharacterized protein (236 aa).

Residues 52 to 72 (FFPYIALFQIIMLIILLILYF) traverse the membrane as a helical segment. The interval 183–236 (SDKREHDDEELSFTTEMETITTETETSSTIPHLRSLPIKSESSMETTSEETDEE) is disordered. The segment covering 196-212 (TTEMETITTETETSSTI) has biased composition (low complexity).

Its subcellular location is the membrane. This is an uncharacterized protein from Acheta domesticus (House cricket).